Reading from the N-terminus, the 145-residue chain is Peptidyl-lysine N-acetyltransferase YjaB (145 aa).

In terms of domain architecture, N-acetyltransferase spans 3 to 144 (INIRRSRHEE…KPYPLLNLIY (142 aa)).

Belongs to the acetyltransferase family.

It catalyses the reaction L-lysyl-[protein] + acetyl-CoA = N(6)-acetyl-L-lysyl-[protein] + CoA + H(+). In terms of biological role, N-epsilon-lysine acetyltransferase that catalyzes acetylation of a large number of proteins. In Salmonella typhimurium (strain LT2 / SGSC1412 / ATCC 700720), this protein is Peptidyl-lysine N-acetyltransferase YjaB (yjaB).